A 1148-amino-acid polypeptide reads, in one-letter code: Envelopment polyprotein (1148 aa).

A signal peptide spans 1–23 (MGKSSPVCLYLILQGLLLFDTVN). The Lumenal segment spans residues 24–496 (AKNLNELKME…PGLHGWATVL (473 aa)). 6 cysteine pairs are disulfide-bonded: C34–C159, C68–C165, C117–C136, C141–C146, C183–C193, and C218–C257. N142 is a glycosylation site (N-linked (GlcNAc...) asparagine; by host). A glycan (N-linked (GlcNAc...) asparagine; by host) is linked at N357. 4 disulfide bridges follow: C386–C445, C390–C399, C415–C434, and C462–C485. N-linked (GlcNAc...) asparagine; by host glycosylation occurs at N409. Residues 497–517 (LLLTFCFGWVLIPTITMILLK) form a helical membrane-spanning segment. Over 518 to 637 (ILIAFAYLCS…LSLFRYRSRF (120 aa)) the chain is Cytoplasmic. Residues 526–543 (CSKYNTDSKFRILVEKVK) are binding to the ribonucleoprotein. 2 CCHC-type zinc fingers span residues 555–575 (CEVCQYECETAKELESHRKSC) and 580–601 (CPYCLNPSEATPSALQAHFKVC). Binding to the ribonucleoprotein stretches follow at residues 598–615 (FKVCKLTSRFQENLKKSL) and 621–635 (MQGCYRTLSLFRYRS). An ITAM domain is found at 621–644 (MQGCYRTLSLFRYRSRFFVGLVWC). The short motif at 625–628 (YRTL) is the YxxL element. Residues 638 to 658 (FVGLVWCMLLVLELIVWAASA) form a helical membrane-spanning segment. Residues 659 to 1115 (ETQNLNDGWT…WVLGVLNGNW (457 aa)) lie on the Lumenal side of the membrane. 8 disulfide bridges follow: C745–C780, C749–C787, C761–C894, C775–C905, C790–C913, C816–C825, C833–C842, and C873–C877. The fusion loop stretch occupies residues 767-787 (YEYETGWGCNPPDCPGVGTGC). An N-linked (GlcNAc...) asparagine; by host glycan is attached at N937. 5 cysteine pairs are disulfide-bonded: C979–C1009, C1002–C1054, C1019–C1024, C1055–C1060, and C1094–C1098. Residues 1116 to 1136 (MVVAVLIALLILSIFLFALCC) form a helical membrane-spanning segment. A binding to the ribonucleoprotein region spans residues 1131–1148 (LFALCCPRRPSYKKDHKP). At 1137–1148 (PRRPSYKKDHKP) the chain is on the cytoplasmic side.

Belongs to the hantavirus envelope glycoprotein family. As to quaternary structure, homodimer. Homotetramer; forms heterotetrameric Gn-Gc spikes in the pre-fusion conformation. Interacts (via C-terminus) with the nucleoprotein. Interacts with host TUFM; this interaction contributes to the virus-induced degradation of mitochondria by autophagy, which leads to degradation of host MAVS and inhibition of type I interferon (IFN) responses. Interacts with host MAP1LC3B; this interaction contributes to the virus-induced degradation of mitochondria by autophagy, which leads to degradation of host MAVS and inhibition of type I interferon (IFN) responses. In terms of assembly, homodimer. Homotetramer; forms heterotetrameric Gn-Gc spikes in the pre-fusion conformation. Homotrimer; forms homotrimer in the post-fusion conformation at acidic pH. Interacts (via C-terminus) with the nucleoprotein. In terms of processing, envelope polyprotein precursor is quickly cleaved in vivo just after synthesis, presumably by host signal peptidase.

The protein resides in the virion membrane. It is found in the host cell surface. Its subcellular location is the host Golgi apparatus membrane. The protein localises to the host endoplasmic reticulum membrane. It localises to the host mitochondrion. Functionally, forms homotetramers with glycoprotein C at the surface of the virion. Attaches the virion to host cell receptors including integrin ITGAV/ITGB3. This attachment induces virion internalization predominantly through clathrin-dependent endocytosis. Mediates the assembly and budding of infectious virus particles through its interaction with the nucleocapsid protein and the viral genome. May dysregulate normal immune and endothelial cell responses through an ITAM motif. Translocates to mitochondria, binds to host TUFM and recruits MAP1LC3B. These interactions induce mitochondrial autophagy and therefore destruction of host MAVS leading to inhibition of type I interferon (IFN) responses. Concomitant breakdown of glycoprotein N is apparently prevented by the nucleoprotein that may inhibit Gn-stimulated autophagosome-lysosome fusion. Interacts with the viral genomic RNA. In terms of biological role, forms heterooctamers with glycoprotein N at the surface of the virion. Attaches the virion to host cell receptors including integrin ITGAV/ITGB3. This attachment induces virion internalization predominantly through clathrin-dependent endocytosis. Class II fusion protein that promotes fusion of viral membrane with host endosomal membrane after endocytosis of the virion. The polypeptide is Envelopment polyprotein (GP) (Homo sapiens (Human)).